The chain runs to 367 residues: Alginate lyase (367 aa).

The first 24 residues, 1–24 (MTIINRKTAPALLALALFGGAAQA), serve as a signal peptide directing secretion. Substrate-binding positions include 63–64 (SK), 136–137 (HT), and tyrosine 254.

Belongs to the polysaccharide lyase 5 family.

Its subcellular location is the periplasm. It catalyses the reaction Eliminative cleavage of alginate to give oligosaccharides with 4-deoxy-alpha-L-erythro-hex-4-enuronosyl groups at their non-reducing ends and beta-D-mannuronate at their reducing end.. Its function is as follows. Catalyzes the depolymerization of alginate by cleaving the beta-1,4 glycosidic bond between two adjacent sugar residues via a beta-elimination mechanism. May serve to degrade mislocalized alginate that is trapped in the periplasmic space. In Pseudomonas entomophila (strain L48), this protein is Alginate lyase.